The following is a 383-amino-acid chain: Deoxyhypusine synthase-like protein (383 aa).

The protein belongs to the deoxyhypusine synthase family.

In Nostoc sp. (strain PCC 7120 / SAG 25.82 / UTEX 2576), this protein is Deoxyhypusine synthase-like protein.